The primary structure comprises 444 residues: DNA repair protein RadA (444 aa).

A C4-type zinc finger spans residues 8–25 (CSNCGNISPKWSGQCFDC). 89-96 (GDPGIGKS) contacts ATP. Residues 248–252 (KNRFG) carry the RadA KNRFG motif motif. The tract at residues 347 to 444 (EVYLSIAGGL…HLKDLKEIIK (98 aa)) is lon-protease-like.

This sequence belongs to the RecA family. RadA subfamily.

Its function is as follows. DNA-dependent ATPase involved in processing of recombination intermediates, plays a role in repairing DNA breaks. Stimulates the branch migration of RecA-mediated strand transfer reactions, allowing the 3' invading strand to extend heteroduplex DNA faster. Binds ssDNA in the presence of ADP but not other nucleotides, has ATPase activity that is stimulated by ssDNA and various branched DNA structures, but inhibited by SSB. Does not have RecA's homology-searching function. This Rickettsia conorii (strain ATCC VR-613 / Malish 7) protein is DNA repair protein RadA.